Reading from the N-terminus, the 359-residue chain is uncharacterized protein (359 aa).

Residues Met-1–Gly-17 form the signal peptide. The N-palmitoyl cysteine moiety is linked to residue Cys-18. A lipid anchor (S-diacylglycerol cysteine) is attached at Cys-18.

The protein resides in the cell membrane. This is an uncharacterized protein from Synechococcus sp. (strain ATCC 27144 / PCC 6301 / SAUG 1402/1) (Anacystis nidulans).